The primary structure comprises 318 residues: Pantothenate kinase (318 aa).

96–103 (GSVAVGKS) is a binding site for ATP.

Belongs to the prokaryotic pantothenate kinase family.

It localises to the cytoplasm. The catalysed reaction is (R)-pantothenate + ATP = (R)-4'-phosphopantothenate + ADP + H(+). Its pathway is cofactor biosynthesis; coenzyme A biosynthesis; CoA from (R)-pantothenate: step 1/5. The chain is Pantothenate kinase from Bradyrhizobium diazoefficiens (strain JCM 10833 / BCRC 13528 / IAM 13628 / NBRC 14792 / USDA 110).